A 74-amino-acid polypeptide reads, in one-letter code: Antimicrobial peptide 36.4 (74 aa).

The first 22 residues, 1–22, serve as a signal peptide directing secretion; the sequence is MKVNVLLAVFLVVMVVTDHCHA. The residue at position 39 (lysine 39) is a Lysine amide. Positions 44 to 74 are excised as a propeptide; sequence LQMEARFQPQNKNYRKRELDLENLFTHMPDY.

The protein belongs to the non-disulfide-bridged peptide (NDBP) superfamily. Short antimicrobial peptide (group 4) family. Expressed by the venom gland.

It is found in the secreted. Its subcellular location is the target cell membrane. Cationic host defense peptide that have antibacterial activity by breaking membranes. Is more effective on Gram-positive than on Gram-negative bacteria. This Lychas mucronatus (Chinese swimming scorpion) protein is Antimicrobial peptide 36.4.